The following is an 862-amino-acid chain: Kinesin-like protein KIN-7E (862 aa).

In terms of domain architecture, Kinesin motor spans 24-346 (KILVLVRLRP…LLFACCAKEV (323 aa)). An ATP-binding site is contributed by 110–117 (GQTSSGKT). Residues 355-428 (VMSDKALVKQ…RLEDFMKMVE (74 aa)) are a coiled coil. Disordered regions lie at residues 463–505 (RTSF…QSEE) and 542–632 (ANGE…TPLV). Over residues 465–476 (SFISDGTSTPLS) the composition is skewed to polar residues. Basic and acidic residues predominate over residues 494-505 (MSPRHSGDQSEE). Residues 612-621 (DSMTSRGSDS) show a composition bias toward polar residues. Residue Lys-734 forms a Glycyl lysine isopeptide (Lys-Gly) (interchain with G-Cter in ubiquitin) linkage.

The protein belongs to the TRAFAC class myosin-kinesin ATPase superfamily. Kinesin family. KIN-7 subfamily.

The polypeptide is Kinesin-like protein KIN-7E (Arabidopsis thaliana (Mouse-ear cress)).